We begin with the raw amino-acid sequence, 308 residues long: UDP-N-acetylenolpyruvoylglucosamine reductase (308 aa).

Residues 33–197 (TGGNADFYLS…LEASFNLAPG (165 aa)) enclose the FAD-binding PCMH-type domain. Arginine 176 is a catalytic residue. Serine 226 acts as the Proton donor in catalysis. Glutamate 296 is a catalytic residue.

Belongs to the MurB family. FAD serves as cofactor.

The protein resides in the cytoplasm. It catalyses the reaction UDP-N-acetyl-alpha-D-muramate + NADP(+) = UDP-N-acetyl-3-O-(1-carboxyvinyl)-alpha-D-glucosamine + NADPH + H(+). It participates in cell wall biogenesis; peptidoglycan biosynthesis. Cell wall formation. The polypeptide is UDP-N-acetylenolpyruvoylglucosamine reductase (Staphylococcus carnosus (strain TM300)).